The following is a 355-amino-acid chain: Phosphoribosylformylglycinamidine cyclo-ligase (355 aa).

The protein belongs to the AIR synthase family.

It is found in the cytoplasm. It carries out the reaction 2-formamido-N(1)-(5-O-phospho-beta-D-ribosyl)acetamidine + ATP = 5-amino-1-(5-phospho-beta-D-ribosyl)imidazole + ADP + phosphate + H(+). The protein operates within purine metabolism; IMP biosynthesis via de novo pathway; 5-amino-1-(5-phospho-D-ribosyl)imidazole from N(2)-formyl-N(1)-(5-phospho-D-ribosyl)glycinamide: step 2/2. The polypeptide is Phosphoribosylformylglycinamidine cyclo-ligase (Paraburkholderia phymatum (strain DSM 17167 / CIP 108236 / LMG 21445 / STM815) (Burkholderia phymatum)).